The following is a 220-amino-acid chain: UPF0319 protein YccT (220 aa).

A signal peptide spans 1 to 20 (MKTGALTTFLALCLPVTVFA).

This sequence belongs to the UPF0319 family.

The polypeptide is UPF0319 protein YccT (Salmonella choleraesuis (strain SC-B67)).